The primary structure comprises 228 residues: Leucyl/phenylalanyl-tRNA--protein transferase (228 aa).

This sequence belongs to the L/F-transferase family.

The protein resides in the cytoplasm. The catalysed reaction is N-terminal L-lysyl-[protein] + L-leucyl-tRNA(Leu) = N-terminal L-leucyl-L-lysyl-[protein] + tRNA(Leu) + H(+). The enzyme catalyses N-terminal L-arginyl-[protein] + L-leucyl-tRNA(Leu) = N-terminal L-leucyl-L-arginyl-[protein] + tRNA(Leu) + H(+). It carries out the reaction L-phenylalanyl-tRNA(Phe) + an N-terminal L-alpha-aminoacyl-[protein] = an N-terminal L-phenylalanyl-L-alpha-aminoacyl-[protein] + tRNA(Phe). Functions in the N-end rule pathway of protein degradation where it conjugates Leu, Phe and, less efficiently, Met from aminoacyl-tRNAs to the N-termini of proteins containing an N-terminal arginine or lysine. The polypeptide is Leucyl/phenylalanyl-tRNA--protein transferase (Lawsonia intracellularis (strain PHE/MN1-00)).